The chain runs to 399 residues: MELNALIKKIESVDSYAREFLKKFEIKQEKGKFLFIAPGEDYREWLETIVNTFLEEEVRKLIEVKEKEEKKKVEIKDFLNPKYTLENFIVGEGNRLAYEVVKEALENLGSLYNPIFIYGSVGTGKTHLLQAAGNEAKKRGYRVIYSSADDFAQAMVEHLKKGTINEFRNMYKSVDLLLLDDVQFLSGKERTQIEFFHIFNTLYLLEKQIILASDRHPQKLDGVSDRLVSRFEGGILVEIELDNKTRFKIIKEKLKEFNLELRKEVIDYLLENTKNVREIEGKIKLIKLKGFEGLERKERKERDKLMQIVEFVANYYAVKVEDILSDKRNKRTSEARKIAMYLCRKVCSASLIEIARAFKRKDHTTVIHAIRSVEEEKKKDRKFKHLVGFLEKQAFDKIC.

Positions 1–64 (MELNALIKKI…EEEVRKLIEV (64 aa)) are domain I, interacts with DnaA modulators. Positions 64–77 (VKEKEEKKKVEIKD) are domain II. The tract at residues 78–290 (FLNPKYTLEN…GKIKLIKLKG (213 aa)) is domain III, AAA+ region. Positions 89, 94, 122, 123, 124, 125, 126, and 127 each coordinate ADP. Ile89 provides a ligand contact to ATP. Residue Gly122 participates in ATP binding. ATP contacts are provided by Gly124, Lys125, Thr126, and His127. Thr126 lines the Mg(2+) pocket. Val156 serves as a coordination point for ssDNA. Asp180 provides a ligand contact to ATP. Asp181 provides a ligand contact to Mg(2+). The ssDNA site is built by Lys188, Arg190, and Thr191. Arg277 is an ATP binding site. The domain IV, binds dsDNA stretch occupies residues 291–399 (FEGLERKERK…LEKQAFDKIC (109 aa)).

The protein belongs to the DnaA family. In the presence of ATP analog AMP-PCP forms a linear, right-handed spiral filament with 4 subunits arranged head-to-tail, about 122 Angstroms wide and about 360 Angstroms long. Mg(2+)-AMP-PCP binds at the subunit interface with the gamma phosphate coordinated by adjacent subunits. dsDNA probably wraps on the outside of the filament. ssDNA binds to the center of the helical filament via the AAA+ domain, which stretches the DNA.

The protein resides in the cytoplasm. In terms of biological role, plays an essential role in the initiation and regulation of chromosomal replication. ATP-DnaA binds to the origin of replication (oriC) to initiate formation of the DNA replication initiation complex once per cell cycle. Binds the DnaA box (a 9 base pair repeat at the origin) and separates the double-stranded (ds)DNA. Forms a right-handed helical filament on oriC DNA; dsDNA binds to the exterior of the filament while single-stranded (ss)DNA is stabiized in the filament's interior. The ATP-DnaA-oriC complex binds and stabilizes one strand of the AT-rich DNA unwinding element (DUE), permitting loading of DNA polymerase. After initiation quickly degrades to an ADP-DnaA complex that is not apt for DNA replication. Binds acidic phospholipids. Able to melt short unstable dsDNA (15-mer with melting temperature, TM, 43 degrees Celsius) in the presence of a non-hydrolyzable ATP analog; a more stable dsDNA (20-mer, TM 55 degrees Celsius) is poor substrate. ADP does not support dsDNA melting. Addition of DnaA-AMP-PCP (an ATP analog, beta,gamma-methyleneadenosine 5'-triphosphate) to an oric-containing plasmid causes a DNA shift to more positively supercoiled topological species, stabilizing a positive wrap and right-handed filament as seen in the crystal structure without DNA. Filament formation generated by positive supercoiling may destabilize the origin unwinding element through compensatory negative supercoiling strain. This chain is Chromosomal replication initiator protein DnaA, found in Aquifex aeolicus (strain VF5).